The chain runs to 292 residues: Histamine N-methyltransferase (292 aa).

Glu28 is a binding site for substrate. Gly60, Glu89, Gln94, Ser120, and Ile142 together coordinate S-adenosyl-L-methionine. Asn283 lines the substrate pocket.

It belongs to the class I-like SAM-binding methyltransferase superfamily. HNMT family. In terms of assembly, monomer. As to expression, expressed in jejunum, brain &gt; lung, spleen, stomach &gt; liver, kidney.

It is found in the cytoplasm. The enzyme catalyses histamine + S-adenosyl-L-methionine = N(tau)-methylhistamine + S-adenosyl-L-homocysteine + H(+). In terms of biological role, inactivates histamine by N-methylation. Plays an important role in degrading histamine and in regulating the airway response to histamine. This is Histamine N-methyltransferase (HNMT) from Cavia porcellus (Guinea pig).